Here is a 154-residue protein sequence, read N- to C-terminus: Aspartate carbamoyltransferase regulatory chain (154 aa).

4 residues coordinate Zn(2+): Cys-109, Cys-114, Cys-138, and Cys-141.

This sequence belongs to the PyrI family. As to quaternary structure, contains catalytic and regulatory chains. Requires Zn(2+) as cofactor.

Functionally, involved in allosteric regulation of aspartate carbamoyltransferase. The sequence is that of Aspartate carbamoyltransferase regulatory chain from Photobacterium profundum (strain SS9).